We begin with the raw amino-acid sequence, 201 residues long: uncharacterized protein (201 aa).

Belongs to the phosphatidylethanolamine-binding protein family.

This is an uncharacterized protein from Saccharomyces cerevisiae (strain ATCC 204508 / S288c) (Baker's yeast).